The primary structure comprises 259 residues: MNILLVNDDGVTAPGILCAARYLSKEHYVVVSAPESEQSAVGHGITLRFPLWARKLDINEPFEMYAVSGTPADCVKIGLDVIYKDKGIMPDVVISGINRGENLGTDVVYSGTVSGALEGAIAGVPSIAISVADFKDPIYETGARFLLNFLKEFDVKRIPRFTALNINVPSVPYEQIKGWKLTRQSKRRYEDYFEKRIDPYGKDYYWMLGDIIEDDPDPKADYKALKEGYISVTPITIFMTNEELLKELEGIYGDGKNFR.

A divalent metal cation is bound by residues D8, D9, S39, and N98.

It belongs to the SurE nucleotidase family. A divalent metal cation is required as a cofactor.

The protein resides in the cytoplasm. It carries out the reaction a ribonucleoside 5'-phosphate + H2O = a ribonucleoside + phosphate. Nucleotidase that shows phosphatase activity on nucleoside 5'-monophosphates. The sequence is that of 5'-nucleotidase SurE from Fervidobacterium nodosum (strain ATCC 35602 / DSM 5306 / Rt17-B1).